A 412-amino-acid polypeptide reads, in one-letter code: Multifunctional CCA protein (412 aa).

Glycine 8 and arginine 11 together coordinate ATP. Residues glycine 8 and arginine 11 each coordinate CTP. Mg(2+)-binding residues include aspartate 21 and aspartate 23. 3 residues coordinate ATP: arginine 91, arginine 137, and arginine 140. Residues arginine 91, arginine 137, and arginine 140 each contribute to the CTP site. Residues 228–329 (TGIHTLMTLS…VKLFDSIDAW (102 aa)) enclose the HD domain.

This sequence belongs to the tRNA nucleotidyltransferase/poly(A) polymerase family. Bacterial CCA-adding enzyme type 1 subfamily. As to quaternary structure, monomer. Can also form homodimers and oligomers. The cofactor is Mg(2+). Requires Ni(2+) as cofactor.

It carries out the reaction a tRNA precursor + 2 CTP + ATP = a tRNA with a 3' CCA end + 3 diphosphate. It catalyses the reaction a tRNA with a 3' CCA end + 2 CTP + ATP = a tRNA with a 3' CCACCA end + 3 diphosphate. Its function is as follows. Catalyzes the addition and repair of the essential 3'-terminal CCA sequence in tRNAs without using a nucleic acid template. Adds these three nucleotides in the order of C, C, and A to the tRNA nucleotide-73, using CTP and ATP as substrates and producing inorganic pyrophosphate. tRNA 3'-terminal CCA addition is required both for tRNA processing and repair. Also involved in tRNA surveillance by mediating tandem CCA addition to generate a CCACCA at the 3' terminus of unstable tRNAs. While stable tRNAs receive only 3'-terminal CCA, unstable tRNAs are marked with CCACCA and rapidly degraded. The protein is Multifunctional CCA protein of Escherichia coli O127:H6 (strain E2348/69 / EPEC).